The primary structure comprises 534 residues: Tyrosine-protein kinase Fyn (534 aa).

Residue Gly2 is the site of N-myristoyl glycine attachment. S-palmitoyl cysteine attachment occurs at residues Cys3 and Cys6. Position 12 is a phosphothreonine; by PKC (Thr12). The disordered stretch occupies residues 15 to 39; sequence TDERDGSLTQSSGYRYGTDPTPQHY. Positions 82–143 constitute an SH3 domain; the sequence is TGVTLFEALY…PSNYVAPVDS (62 aa). Positions 149-246 constitute an SH2 domain; it reads WYFGKLGRKD…GLCFNLTVIA (98 aa). Residues 268–521 form the Protein kinase domain; it reads LFLEQKLGQG…YLQGFLEDYF (254 aa). Residues 274-282 and Lys296 each bind ATP; that span reads LGQGCFAEV. The active-site Proton acceptor is Asp387. Position 417 is a phosphotyrosine; by autocatalysis (Tyr417). Tyr528 carries the phosphotyrosine modification.

The protein belongs to the protein kinase superfamily. Tyr protein kinase family. SRC subfamily. In terms of assembly, associates through its SH3 domain, to the p85 subunit of phosphatidylinositol 3-kinase. Mn(2+) is required as a cofactor. Thymus and spleen.

Its subcellular location is the cytoplasm. It localises to the nucleus. The protein localises to the cell membrane. The protein resides in the perikaryon. The enzyme catalyses L-tyrosyl-[protein] + ATP = O-phospho-L-tyrosyl-[protein] + ADP + H(+). Inhibited by phosphorylation of Tyr-528 by leukocyte common antigen and activated by dephosphorylation of this site. Its function is as follows. Tyrosine-protein kinase implicated in the control of cell growth. Plays a role in the regulation of intracellular calcium levels. Required in brain development and mature brain function with important roles in the regulation of axon growth, axon guidance, and neurite extension. Role in CNTN1-mediated signaling. This chain is Tyrosine-protein kinase Fyn (FYN), found in Gallus gallus (Chicken).